A 144-amino-acid polypeptide reads, in one-letter code: Transcriptional regulator MraZ (144 aa).

SpoVT-AbrB domains lie at 6–48 (TYTP…PTDV) and 77–120 (ADEG…DPVR).

It belongs to the MraZ family. Forms oligomers.

The protein resides in the cytoplasm. The protein localises to the nucleoid. The sequence is that of Transcriptional regulator MraZ from Nocardioides sp. (strain ATCC BAA-499 / JS614).